We begin with the raw amino-acid sequence, 418 residues long: UDP-N-acetylglucosamine 1-carboxyvinyltransferase (418 aa).

22–23 (KN) serves as a coordination point for phosphoenolpyruvate. Arg92 serves as a coordination point for UDP-N-acetyl-alpha-D-glucosamine. Cys116 acts as the Proton donor in catalysis. Cys116 bears the 2-(S-cysteinyl)pyruvic acid O-phosphothioketal mark. UDP-N-acetyl-alpha-D-glucosamine-binding residues include Asp306 and Ile328.

This sequence belongs to the EPSP synthase family. MurA subfamily.

It is found in the cytoplasm. The catalysed reaction is phosphoenolpyruvate + UDP-N-acetyl-alpha-D-glucosamine = UDP-N-acetyl-3-O-(1-carboxyvinyl)-alpha-D-glucosamine + phosphate. It functions in the pathway cell wall biogenesis; peptidoglycan biosynthesis. Its function is as follows. Cell wall formation. Adds enolpyruvyl to UDP-N-acetylglucosamine. The protein is UDP-N-acetylglucosamine 1-carboxyvinyltransferase of Shewanella amazonensis (strain ATCC BAA-1098 / SB2B).